The chain runs to 215 residues: MKGVYFVSGIDTDIGKTVATGVLAKQLLQQGKSVITQKPVQTGCQNIADDIAVHRKIMGKPMQEADKQGLTMPEIFSYPASPHLAARLDGRALDLDKIRTATQQLAAQYEIVLVEGAGGLMVPLTENLLTIDYIRQQGYPVILVTSGRLGSINHTLLSFAALKQYGIRLHSLVFNHIHDSRDAHIAQDSLNYLKCRLKADFSEAEWMELAKTDAV.

Residue 13 to 18 coordinates ATP; it reads DIGKTV. T17 contributes to the Mg(2+) binding site. The active site involves K38. T42 lines the substrate pocket. ATP is bound by residues D50, 115-118, and 175-176; these read EGAG and NH. Residues D50 and E115 each coordinate Mg(2+).

Belongs to the dethiobiotin synthetase family. In terms of assembly, homodimer. The cofactor is Mg(2+).

The protein localises to the cytoplasm. The catalysed reaction is (7R,8S)-7,8-diammoniononanoate + CO2 + ATP = (4R,5S)-dethiobiotin + ADP + phosphate + 3 H(+). It functions in the pathway cofactor biosynthesis; biotin biosynthesis; biotin from 7,8-diaminononanoate: step 1/2. In terms of biological role, catalyzes a mechanistically unusual reaction, the ATP-dependent insertion of CO2 between the N7 and N8 nitrogen atoms of 7,8-diaminopelargonic acid (DAPA, also called 7,8-diammoniononanoate) to form a ureido ring. The polypeptide is ATP-dependent dethiobiotin synthetase BioD (Neisseria meningitidis serogroup C (strain 053442)).